A 65-amino-acid chain; its full sequence is MPKIKTVRGAAKRFKKTASGGFKRKQSHLRHILTKKTTKRKRHLCHKSMVAKADQVLVVACLPYA.

The interval 1–26 (MPKIKTVRGAAKRFKKTASGGFKRKQ) is disordered. Positions 10 to 26 (AAKRFKKTASGGFKRKQ) are enriched in basic residues.

It belongs to the bacterial ribosomal protein bL35 family.

This Haemophilus ducreyi (strain 35000HP / ATCC 700724) protein is Large ribosomal subunit protein bL35.